The primary structure comprises 137 residues: MAQLTVQVVTPDGIRYDHHASLITVRTPDGEMGILPGHINLIAPLNVHQMKINRSHQEGVDWVAVNGGIIEVNEDQVTIVADSAERARDIDLNRAERAKERAERALEKAQTTQNIDEMRRAEVALRRAINRISVGKK.

Belongs to the ATPase epsilon chain family. F-type ATPases have 2 components, CF(1) - the catalytic core - and CF(0) - the membrane proton channel. CF(1) has five subunits: alpha(3), beta(3), gamma(1), delta(1), epsilon(1). CF(0) has three main subunits: a, b and c.

The protein localises to the cell membrane. In terms of biological role, produces ATP from ADP in the presence of a proton gradient across the membrane. The polypeptide is ATP synthase epsilon chain (Streptococcus agalactiae serotype Ia (strain ATCC 27591 / A909 / CDC SS700)).